The primary structure comprises 620 residues: MGKILGIDLGTTNSCMAVIEGGKPTVIPNAEGGRTTPSVVGFSKKGDKLVGQVAKRQMIANPGNSVSSIKRHIGEGDYKVNLSGKDYTPQEVSAMILRKLKDDAEAYLGETITQTVITVPAYFNDSQRQATKDAGQIAGLEVLRIINEPTAASLAYGLDKEEGDHKILVYDLGGGTFDVSILELGDGVFEVLSTSGNTHLGGDDFDQRITEFLVEEFKKAEGIDLSNDKAALQRLNDAAEKAKIELSGVASTNVNLPFITADSNGQPKHIDIDITRAQFEKMTEDLVAKTLESMKMALSDAKLTTKDIDRVLLIGGSTRTPAVYNLVKNFIGKDPYKNINPDEAVAVGAAIQAGVLSGEVHDVLLLDVTPLTMGIETLGGVATPLIERNTTIPVKKSQIFSTAADSQPSVEIHILQGERGIASANKTLGRFVLDGIPPAPRGLPQIEVTFDIDSNGILHVNAKDLGTGKEQSISIQKPGGLSDEEIERMVKDAELHAEEDKARKEEVETRNNADSLVNAAENTLKEAGDVATNEQKEQIEAAIADLKTALEGEDLEAIKSKTEALQESVYKVSAAMYEKAQKEASAGAEASEDASGPSSTGSASDDDVVDADYEVVDEDK.

The segment at 579–620 (KAQKEASAGAEASEDASGPSSTGSASDDDVVDADYEVVDEDK) is disordered. Residues 583–603 (EASAGAEASEDASGPSSTGSA) are compositionally biased toward low complexity. The span at 604-620 (SDDDVVDADYEVVDEDK) shows a compositional bias: acidic residues.

It belongs to the heat shock protein 70 family.

In terms of biological role, acts as a chaperone. In Methanococcoides burtonii (strain DSM 6242 / NBRC 107633 / OCM 468 / ACE-M), this protein is Chaperone protein DnaK.